Consider the following 205-residue polypeptide: FMN reductase (NADH) RutF (205 aa).

The tract at residues 171 to 205 (PRAPRSGSAPAEPARAARALGARPAEGPALALRSA) is disordered.

It belongs to the non-flavoprotein flavin reductase family. RutF subfamily.

The enzyme catalyses FMNH2 + NAD(+) = FMN + NADH + 2 H(+). Functionally, catalyzes the reduction of FMN to FMNH2 which is used to reduce pyrimidine by RutA via the Rut pathway. This is FMN reductase (NADH) RutF from Methylorubrum extorquens (strain DSM 6343 / CIP 106787 / DM4) (Methylobacterium extorquens).